The following is a 370-amino-acid chain: Ig heavy chain C region (370 aa).

Ig-like domains lie at 40 to 134 (PTVI…RNIT), 145 to 237 (PAIK…DSIH), and 247 to 347 (PSVS…RTVN). N-linked (GlcNAc...) asparagine glycans are attached at residues asparagine 98, asparagine 132, asparagine 177, asparagine 343, asparagine 347, and asparagine 357.

In Heterodontus francisci (Horn shark), this protein is Ig heavy chain C region.